The primary structure comprises 460 residues: 2-methylcitrate synthase, mitochondrial (460 aa).

The N-terminal 24 residues, 1 to 24, are a transit peptide targeting the mitochondrion; that stretch reads MALPLRTARHASRLAQTIGRRGYA. Arg-69 and Lys-187 together coordinate CoA. His-264 contacts oxaloacetate. A CoA-binding site is contributed by Leu-299. His-300 is an active-site residue. Val-341, Gly-343, and Tyr-344 together coordinate CoA. 2 residues coordinate oxaloacetate: His-346 and Arg-355. His-346 is a catalytic residue. CoA-binding residues include Thr-395, Lys-396, and Asn-401. Asp-403 is an active-site residue. The oxaloacetate site is built by Arg-429 and Arg-449.

Belongs to the citrate synthase family. In terms of assembly, homodimer.

The protein localises to the mitochondrion matrix. The catalysed reaction is propanoyl-CoA + oxaloacetate + H2O = (2S,3S)-2-methylcitrate + CoA + H(+). It carries out the reaction oxaloacetate + acetyl-CoA + H2O = citrate + CoA + H(+). It participates in organic acid metabolism; propanoate degradation. Its activity is regulated as follows. Partially inhibited by ATP. In terms of biological role, catalyzes the synthesis of (2S,3S)-2-methylcitrate from propionyl-CoA and oxaloacetate and also from acetyl-CoA and oxaloacetate with a greater efficiency. Also has citrate synthase activity and can substitute for the loss of citA activity. The polypeptide is 2-methylcitrate synthase, mitochondrial (Emericella nidulans (strain FGSC A4 / ATCC 38163 / CBS 112.46 / NRRL 194 / M139) (Aspergillus nidulans)).